The primary structure comprises 431 residues: Glucose-1-phosphate adenylyltransferase (431 aa).

Lys39 serves as a coordination point for beta-D-fructose 1,6-bisphosphate. Residues Arg40, His46, and Arg52 each contribute to the AMP site. Tyr114 lines the alpha-D-glucose 1-phosphate pocket. Arg130 provides a ligand contact to AMP. Alpha-D-glucose 1-phosphate is bound by residues Gly179, 194-195, and Ser212; that span reads EK. Positions 370 and 386 each coordinate AMP. Beta-D-fructose 1,6-bisphosphate contacts are provided by residues 419-423 and 429-431; these read REMLR and QER.

The protein belongs to the bacterial/plant glucose-1-phosphate adenylyltransferase family. Homotetramer.

The catalysed reaction is alpha-D-glucose 1-phosphate + ATP + H(+) = ADP-alpha-D-glucose + diphosphate. It functions in the pathway glycan biosynthesis; glycogen biosynthesis. Its activity is regulated as follows. Allosterically activated by fructose-1,6-bisphosphate (F16BP) and inhibited by AMP. Involved in the biosynthesis of ADP-glucose, a building block required for the elongation reactions to produce glycogen. Catalyzes the reaction between ATP and alpha-D-glucose 1-phosphate (G1P) to produce pyrophosphate and ADP-Glc. The chain is Glucose-1-phosphate adenylyltransferase from Escherichia coli O127:H6 (strain E2348/69 / EPEC).